The sequence spans 433 residues: Ornithine decarboxylase, chloroplastic (433 aa).

Position 96 is an N6-(pyridoxal phosphate)lysine (K96). Pyridoxal 5'-phosphate contacts are provided by residues S228, G266, and 299-302; that span reads EPGR. 342–343 is a binding site for substrate; sequence YD. C378 (proton donor; shared with dimeric partner) is an active-site residue. D379 contributes to the substrate binding site. A pyridoxal 5'-phosphate-binding site is contributed by Y407.

It belongs to the Orn/Lys/Arg decarboxylase class-II family. Homodimer. Only the dimer is catalytically active, as the active sites are constructed of residues from both monomers. Pyridoxal 5'-phosphate serves as cofactor.

The protein resides in the plastid. The protein localises to the chloroplast. It catalyses the reaction L-ornithine + H(+) = putrescine + CO2. It functions in the pathway alkaloid biosynthesis; nicotine biosynthesis. The protein operates within amine and polyamine biosynthesis; putrescine biosynthesis via L-ornithine pathway; putrescine from L-ornithine: step 1/1. Involved in the biosynthesis of pyridine alkaloid natural products, leading mainly to the production of anabasine, anatabine, nicotine and nornicotine, effective deterrents against herbivores with antiparasitic and pesticide properties (neurotoxins); nornicotine serves as the precursor in the synthesis of the carcinogen compound N'-nitrosonornicotine (NNN). Catalyzes the first and rate-limiting step of polyamine biosynthesis that converts ornithine into putrescine, which is the precursor for the polyamines, spermidine and spermine. Polyamines are essential for cell proliferation and are implicated in cellular processes, ranging from DNA replication to apoptosis. This chain is Ornithine decarboxylase, chloroplastic, found in Nicotiana glauca (Glaucous tobacco).